A 78-amino-acid chain; its full sequence is Large ribosomal subunit protein bL28 (78 aa).

The protein belongs to the bacterial ribosomal protein bL28 family.

This Trichormus variabilis (strain ATCC 29413 / PCC 7937) (Anabaena variabilis) protein is Large ribosomal subunit protein bL28.